The following is a 372-amino-acid chain: Oxidoreductase ptaL (372 aa).

The first 16 residues, 1-16 (MKHIVIIGGGFAGVST), serve as a signal peptide directing secretion. 6-hydroxy-FAD contacts are provided by residues 8 to 12 (GGGFA) and arginine 51. A glycan (N-linked (GlcNAc...) asparagine) is linked at asparagine 251. Aspartate 285 serves as a coordination point for 6-hydroxy-FAD.

It belongs to the FAD-dependent oxidoreductase family. 6-hydroxy-FAD serves as cofactor.

It participates in secondary metabolite biosynthesis. Oxidoreductase; part of the gene cluster that mediates the biosynthesis of pestheic acid, a diphenyl ether which is a biosynthetic precursor of the unique chloropupukeananes. The biosynthesis initiates from condensation of acetate and malonate units catalyzed by the non-reducing PKS ptaA. As the ptaA protein is TE/CLC domain-deficient, hydrolysis and Claisen cyclization of the polyketide could be catalyzed by ptaB containing a beta-lactamase domain. The ptaB protein might hydrolyze the thioester bond between the ACP of ptaA and the intermediate to release atrochrysone carboxylic acid, which is spontaneously dehydrated to form endocrocin anthrone. Endocrocin anthrone is then converted to endocrocin, catalyzed by the anthrone oxygenase ptaC. Spontaneous decarboxylation of endocrocin occurs to generate emodin. An O-methyltransferase (ptaH or ptaI) could methylate emodin to form physcion. PtaJ could then catalyze the oxidative cleavage of physcion, and rotation of the intermediate could then afford desmethylisosulochrin. PtaF, a putative NADH-dependent oxidoreductase, might also participate in the oxidative cleavage step. Desmethylisosulochrin is then transformed by another O-methyltransferase (ptaH or ptaI) to form isosulochrin. Chlorination of isosulochrin by ptaM in the cyclohexadienone B ring then produces chloroisosulochrin. PtaE is responsible for the oxidative coupling reactions of both benzophenones isosulochrin and chloroisosulochrin to RES-1214-1 and pestheic acid respectively, regardless of chlorination. The sequence is that of Oxidoreductase ptaL from Pestalotiopsis fici (strain W106-1 / CGMCC3.15140).